An 82-amino-acid chain; its full sequence is Envelope small membrane protein (82 aa).

At 1–19 (MTFPRAFTIIDDHGMVVSV) the chain is on the virion surface side. Residues 20–40 (FFWLLLIIILILFSIALLNVI) traverse the membrane as a helical segment. Over 41–82 (KLCMVCCNLGKTIIVLPARHAYDAYKTFMQTKAYNPDEAFLV) the chain is Intravirion.

It belongs to the alphacoronaviruses E protein family. As to quaternary structure, homopentamer. Interacts with membrane protein M in the budding compartment of the host cell, which is located between endoplasmic reticulum and the Golgi complex. Interacts with Nucleoprotein.

It is found in the host Golgi apparatus membrane. Plays a central role in virus morphogenesis and assembly. Acts as a viroporin and self-assembles in host membranes forming pentameric protein-lipid pores that allow ion transport. Also plays a role in the induction of apoptosis. This Feline coronavirus (strain FIPV WSU-79/1146) (FCoV) protein is Envelope small membrane protein.